A 343-amino-acid polypeptide reads, in one-letter code: Adenosine kinase (343 aa).

D296 is a catalytic residue.

The protein belongs to the carbohydrate kinase PfkB family. The cofactor is Mg(2+).

It catalyses the reaction adenosine + ATP = AMP + ADP + H(+). The protein operates within purine metabolism; AMP biosynthesis via salvage pathway; AMP from adenosine: step 1/1. Functionally, ATP dependent phosphorylation of adenosine and other related nucleoside analogs to monophosphate derivatives. Can also act on the cytokinin isopentenyladenosine to produce isopentenyladenosine monophosphate. The chain is Adenosine kinase (ADK) from Physcomitrium patens (Spreading-leaved earth moss).